Here is a 456-residue protein sequence, read N- to C-terminus: Outer membrane protein assembly factor BamB (456 aa).

An N-terminal signal peptide occupies residues 1 to 19 (MKKLLFITAPLLLSVLTAS). Residue C20 is the site of N-palmitoyl cysteine attachment. C20 carries S-diacylglycerol cysteine lipidation.

The protein belongs to the BamB family. In terms of assembly, part of the Bam complex.

The protein resides in the cell outer membrane. Functionally, part of the outer membrane protein assembly complex, which is involved in assembly and insertion of beta-barrel proteins into the outer membrane. In Francisella tularensis subsp. tularensis (strain SCHU S4 / Schu 4), this protein is Outer membrane protein assembly factor BamB.